A 328-amino-acid chain; its full sequence is Delta(3,5)-Delta(2,4)-dienoyl-CoA isomerase, mitochondrial (328 aa).

The N-terminal 26 residues, 1 to 26 (MAAGIVASRRLRDLLTRRLTASNYPG), are a transit peptide targeting the mitochondrion. Substrate is bound by residues 116–120 (AGVDL) and glycine 174. Lysine 231 carries the post-translational modification N6-succinyllysine. Serine 268 carries the post-translational modification Phosphoserine. Residues 326–328 (SKL) carry the Microbody targeting signal motif. Lysine 327 is modified (N6-acetyllysine).

It belongs to the enoyl-CoA hydratase/isomerase family. In terms of assembly, homohexamer.

It localises to the mitochondrion. The protein resides in the peroxisome. The catalysed reaction is (3E,5Z)-octadienoyl-CoA = (2E,4E)-octadienoyl-CoA. It catalyses the reaction (3E,5Z,8Z,11Z,14Z)-eicosapentaenoyl-CoA = (2E,4E,8Z,11Z,14Z)-eicosapentaenoyl-CoA. Its pathway is lipid metabolism; fatty acid beta-oxidation. Its function is as follows. Isomerization of 3-trans,5-cis-dienoyl-CoA to 2-trans,4-trans-dienoyl-CoA. This chain is Delta(3,5)-Delta(2,4)-dienoyl-CoA isomerase, mitochondrial (ECH1), found in Pongo abelii (Sumatran orangutan).